The chain runs to 102 residues: Small ribosomal subunit protein uS10 (102 aa).

It belongs to the universal ribosomal protein uS10 family. In terms of assembly, part of the 30S ribosomal subunit.

Involved in the binding of tRNA to the ribosomes. This chain is Small ribosomal subunit protein uS10, found in Agrobacterium fabrum (strain C58 / ATCC 33970) (Agrobacterium tumefaciens (strain C58)).